The chain runs to 407 residues: Ameloblastin (407 aa).

A signal peptide spans 1–26 (MSASKIPLFKMKGLILFLSLVKMSLA). Residue Pro-42 is modified to Hydroxyproline. Ser-48 bears the Phosphoserine mark. Disordered stretches follow at residues 124–143 (GVQVTPQKPGPQPPMHPGQL) and 259–304 (QNSP…ENPA).

This sequence belongs to the ameloblastin family. Ameloblast-specific.

It is found in the secreted. The protein resides in the extracellular space. It localises to the extracellular matrix. In terms of biological role, involved in the mineralization and structural organization of enamel. The chain is Ameloblastin (Ambn) from Mus musculus (Mouse).